A 495-amino-acid chain; its full sequence is Glutamyl-tRNA(Gln) amidotransferase subunit A (495 aa).

Catalysis depends on charge relay system residues Lys75 and Ser150. Catalysis depends on Ser174, which acts as the Acyl-ester intermediate.

It belongs to the amidase family. GatA subfamily. In terms of assembly, heterotrimer of A, B and C subunits.

The catalysed reaction is L-glutamyl-tRNA(Gln) + L-glutamine + ATP + H2O = L-glutaminyl-tRNA(Gln) + L-glutamate + ADP + phosphate + H(+). Functionally, allows the formation of correctly charged Gln-tRNA(Gln) through the transamidation of misacylated Glu-tRNA(Gln) in organisms which lack glutaminyl-tRNA synthetase. The reaction takes place in the presence of glutamine and ATP through an activated gamma-phospho-Glu-tRNA(Gln). The sequence is that of Glutamyl-tRNA(Gln) amidotransferase subunit A from Ralstonia nicotianae (strain ATCC BAA-1114 / GMI1000) (Ralstonia solanacearum).